The sequence spans 387 residues: Phosphoglycerate kinase (387 aa).

Residues 21–23 (DLN), R36, 59–62 (HLGR), R113, and R146 contribute to the substrate site. Residues K197, E314, and 340-343 (GGDT) each bind ATP.

It belongs to the phosphoglycerate kinase family. Monomer.

Its subcellular location is the cytoplasm. The enzyme catalyses (2R)-3-phosphoglycerate + ATP = (2R)-3-phospho-glyceroyl phosphate + ADP. Its pathway is carbohydrate degradation; glycolysis; pyruvate from D-glyceraldehyde 3-phosphate: step 2/5. In Salmonella schwarzengrund (strain CVM19633), this protein is Phosphoglycerate kinase.